The sequence spans 373 residues: SWI/SNF-related matrix-associated actin-dependent regulator of chromatin subfamily B member 1-A (373 aa).

The DNA-binding stretch occupies residues 1–101; it reads MALSKTYGQK…DEKYKAVSIS (101 aa).

This sequence belongs to the SNF5 family. In terms of assembly, component of the multiprotein chromatin-remodeling complexes SWI/SNF. Component of neural progenitors-specific chromatin remodeling complex (npBAF complex) and the neuron-specific chromatin remodeling complex (nBAF complex). Component of the BAF (SWI/SNF) chromatin remodeling complex. Component of the SWI/SNF-B (PBAF) chromatin remodeling complex. Binds to double-stranded DNA.

The protein resides in the nucleus. In terms of biological role, involved in chromatin-remodeling. Core component of the BAF (SWI/SNF) complex. This ATP-dependent chromatin-remodeling complex plays important roles in cell proliferation and differentiation, in cellular antiviral activities and inhibition of tumor formation. Belongs to the neural progenitors-specific chromatin remodeling complex (npBAF complex) and the neuron-specific chromatin remodeling complex (nBAF complex) and may play a role in neural development. This is SWI/SNF-related matrix-associated actin-dependent regulator of chromatin subfamily B member 1-A (smarcb1a) from Danio rerio (Zebrafish).